The following is a 265-amino-acid chain: UPF0354 protein BH3252 (265 aa).

The protein belongs to the UPF0354 family.

This is UPF0354 protein BH3252 from Halalkalibacterium halodurans (strain ATCC BAA-125 / DSM 18197 / FERM 7344 / JCM 9153 / C-125) (Bacillus halodurans).